The following is a 383-amino-acid chain: Putative glutamate--cysteine ligase 2 (383 aa).

This sequence belongs to the glutamate--cysteine ligase type 2 family. YbdK subfamily.

The enzyme catalyses L-cysteine + L-glutamate + ATP = gamma-L-glutamyl-L-cysteine + ADP + phosphate + H(+). Its function is as follows. ATP-dependent carboxylate-amine ligase which exhibits weak glutamate--cysteine ligase activity. The chain is Putative glutamate--cysteine ligase 2 from Legionella pneumophila subsp. pneumophila (strain Philadelphia 1 / ATCC 33152 / DSM 7513).